Consider the following 289-residue polypeptide: Deoxyuridine 5'-triphosphate nucleotidohydrolase (289 aa).

Substrate contacts are provided by residues R176 to G178 and F283 to G284.

Belongs to the dUTPase family. Mg(2+) is required as a cofactor.

The catalysed reaction is dUTP + H2O = dUMP + diphosphate + H(+). In terms of biological role, involved in nucleotide metabolism: produces dUMP, the immediate precursor of thymidine nucleotides and decreases the intracellular concentration of dUTP to avoid uracil incorporation into viral DNA. This is Deoxyuridine 5'-triphosphate nucleotidohydrolase from Equus caballus (Horse).